The primary structure comprises 299 residues: Putative hydrolase YtaP (299 aa).

Belongs to the dienelactone hydrolase family.

The polypeptide is Putative hydrolase YtaP (ytaP) (Bacillus subtilis (strain 168)).